The following is a 194-amino-acid chain: Adenylate kinase (194 aa).

10–15 (GAGKGT) provides a ligand contact to ATP. The NMP stretch occupies residues 30–59 (STGDMLRAAVKAETEIGKKAKAVMDAGELV). Residues Thr31, Arg36, 57 to 59 (ELV), 85 to 88 (GYPR), and Gln92 contribute to the AMP site. An LID region spans residues 126–142 (KRAEDAQAAGQPVRRDD). Residue Arg127 coordinates ATP. Arg139 and Arg150 together coordinate AMP. Ala178 lines the ATP pocket.

It belongs to the adenylate kinase family. In terms of assembly, monomer.

It is found in the cytoplasm. The catalysed reaction is AMP + ATP = 2 ADP. The protein operates within purine metabolism; AMP biosynthesis via salvage pathway; AMP from ADP: step 1/1. Catalyzes the reversible transfer of the terminal phosphate group between ATP and AMP. Plays an important role in cellular energy homeostasis and in adenine nucleotide metabolism. This is Adenylate kinase from Chelativorans sp. (strain BNC1).